Reading from the N-terminus, the 293-residue chain is Ribonuclease H2 subunit B (293 aa).

The segment at 251–278 (KRPQNSDITSSLLKKPNRKQATKKSKYF) is disordered. Residues 265–276 (KPNRKQATKKSK) show a composition bias toward basic residues.

Belongs to the RNase H2 subunit B family. Component of the RNase H2 complex.

The protein localises to the nucleus. It localises to the cytoplasm. Functionally, non catalytic subunit of RNase H2, an endonuclease that specifically degrades the RNA of RNA:DNA hybrids. Participates in DNA replication, possibly by mediating the removal of lagging-strand Okazaki fragment RNA primers during DNA replication. Mediates the excision of single ribonucleotides from DNA:RNA duplexes. This Schizosaccharomyces pombe (strain 972 / ATCC 24843) (Fission yeast) protein is Ribonuclease H2 subunit B (rnh202).